The primary structure comprises 184 residues: ATP synthase subunit delta (184 aa).

This sequence belongs to the ATPase delta chain family. F-type ATPases have 2 components, F(1) - the catalytic core - and F(0) - the membrane proton channel. F(1) has five subunits: alpha(3), beta(3), gamma(1), delta(1), epsilon(1). F(0) has three main subunits: a(1), b(2) and c(10-14). The alpha and beta chains form an alternating ring which encloses part of the gamma chain. F(1) is attached to F(0) by a central stalk formed by the gamma and epsilon chains, while a peripheral stalk is formed by the delta and b chains.

Its subcellular location is the cell membrane. Its function is as follows. F(1)F(0) ATP synthase produces ATP from ADP in the presence of a proton or sodium gradient. F-type ATPases consist of two structural domains, F(1) containing the extramembraneous catalytic core and F(0) containing the membrane proton channel, linked together by a central stalk and a peripheral stalk. During catalysis, ATP synthesis in the catalytic domain of F(1) is coupled via a rotary mechanism of the central stalk subunits to proton translocation. In terms of biological role, this protein is part of the stalk that links CF(0) to CF(1). It either transmits conformational changes from CF(0) to CF(1) or is implicated in proton conduction. This is ATP synthase subunit delta from Christiangramia forsetii (strain DSM 17595 / CGMCC 1.15422 / KT0803) (Gramella forsetii).